The chain runs to 27 residues: Cupiennin-3a (27 aa).

Glutamate 27 bears the Glutamic acid 1-amide mark.

Expressed by the venom gland.

The protein localises to the secreted. In Cupiennius salei (American wandering spider), this protein is Cupiennin-3a.